The chain runs to 95 residues: Integration host factor subunit beta (95 aa).

It belongs to the bacterial histone-like protein family. In terms of assembly, heterodimer of an alpha and a beta chain.

Functionally, this protein is one of the two subunits of integration host factor, a specific DNA-binding protein that functions in genetic recombination as well as in transcriptional and translational control. Involved in hydrogenase gene expression. The sequence is that of Integration host factor subunit beta (ihfB) from Rhodobacter capsulatus (Rhodopseudomonas capsulata).